A 401-amino-acid chain; its full sequence is Tumor necrosis factor receptor superfamily member 11B (401 aa).

Residues 1-21 (MNNLLCCALVFLDISIKWTTQ) form the signal peptide. TNFR-Cys repeat units lie at residues 24–62 (FPPK…KTVC), 65–105 (CPDH…NRVC), 107–142 (CKEG…NTVC), and 145–185 (CPDG…DNIC). Intrachain disulfides connect cysteine 41-cysteine 54, cysteine 44-cysteine 62, cysteine 65-cysteine 80, cysteine 83-cysteine 97, cysteine 87-cysteine 105, cysteine 107-cysteine 118, cysteine 124-cysteine 142, and cysteine 145-cysteine 160. An N-linked (GlcNAc...) asparagine glycan is attached at asparagine 98. N-linked (GlcNAc...) asparagine glycosylation is found at asparagine 152, asparagine 165, and asparagine 178. Cysteine 166 and cysteine 185 form a disulfide bridge. Death domains lie at 198–269 (DVTL…IVKK) and 270–365 (IIQD…TQSL). Asparagine 289 is a glycosylation site (N-linked (GlcNAc...) asparagine).

Homodimer. Interacts with TNFSF10 and TNFSF11. N-glycosylated. Contains sialic acid residues. In terms of processing, the N-terminus is blocked. In terms of tissue distribution, highly expressed in adult lung, heart, kidney, liver, spleen, thymus, prostate, ovary, small intestine, thyroid, lymph node, trachea, adrenal gland, testis, and bone marrow. Detected at very low levels in brain, placenta and skeletal muscle. Highly expressed in fetal kidney, liver and lung.

The protein localises to the secreted. Functionally, acts as a decoy receptor for TNFSF11/RANKL and thereby neutralizes its function in osteoclastogenesis. Inhibits the activation of osteoclasts and promotes osteoclast apoptosis in vitro. Bone homeostasis seems to depend on the local ratio between TNFSF11 and TNFRSF11B. May also play a role in preventing arterial calcification. May act as decoy receptor for TNFSF10/TRAIL and protect against apoptosis. TNFSF10/TRAIL binding blocks the inhibition of osteoclastogenesis. The polypeptide is Tumor necrosis factor receptor superfamily member 11B (TNFRSF11B) (Homo sapiens (Human)).